A 103-amino-acid chain; its full sequence is uncharacterized protein (103 aa).

The N-terminal stretch at 1 to 13 (MLLSSIVSFVADA) is a signal peptide. Asparagine 67 is a glycosylation site (N-linked (GlcNAc...) asparagine). The interval 73-103 (LSSDSNRNIIDNSNNNQHPSSSSTSTSWKKF) is disordered.

It localises to the secreted. This is an uncharacterized protein from Dictyostelium discoideum (Social amoeba).